A 267-amino-acid chain; its full sequence is Glutamate racemase (267 aa).

Residues 13 to 14 (DS) and 45 to 46 (YS) contribute to the substrate site. The active-site Proton donor/acceptor is the Cys-77. Residue 78 to 79 (NT) coordinates substrate. Cys-188 serves as the catalytic Proton donor/acceptor. 189-190 (TH) contributes to the substrate binding site.

This sequence belongs to the aspartate/glutamate racemases family.

It carries out the reaction L-glutamate = D-glutamate. It participates in cell wall biogenesis; peptidoglycan biosynthesis. Functionally, provides the (R)-glutamate required for cell wall biosynthesis. This chain is Glutamate racemase, found in Histophilus somni (strain 129Pt) (Haemophilus somnus).